Reading from the N-terminus, the 97-residue chain is Small ribosomal subunit protein bS6 (97 aa).

It belongs to the bacterial ribosomal protein bS6 family.

Binds together with bS18 to 16S ribosomal RNA. The protein is Small ribosomal subunit protein bS6 of Listeria innocua serovar 6a (strain ATCC BAA-680 / CLIP 11262).